An 832-amino-acid polypeptide reads, in one-letter code: Pre-mRNA-splicing factor SYF1 (832 aa).

HAT repeat units lie at residues 18 to 50 (HLVT…YKIQ), 52 to 84 (GTVE…FRTK), 96 to 128 (AEYR…FLMK), 130 to 164 (PLVT…FANS), 196 to 235 (GYYT…LLVE), 245 to 278 (ETGI…YWIR), 280 to 315 (GSFE…FEES), 383 to 421 (DNHN…FYER), 423 to 459 (GDLR…MELR), 476 to 508 (APKR…YVDL), 513 to 545 (GTLE…LLEE), 547 to 581 (KYYE…KAVD), 584 to 618 (ISIE…LEEE), 656 to 690 (FGLP…MEKR), and 692 to 726 (GEID…FEVQ).

This sequence belongs to the crooked-neck family. In terms of assembly, associated with the spliceosome.

It localises to the nucleus. Involved in pre-mRNA splicing and cell cycle progression. The chain is Pre-mRNA-splicing factor SYF1 (SYF1) from Pyricularia oryzae (strain 70-15 / ATCC MYA-4617 / FGSC 8958) (Rice blast fungus).